Reading from the N-terminus, the 410-residue chain is Multifunctional CCA protein (410 aa).

Residues Gly8 and Arg11 each contribute to the ATP site. CTP is bound by residues Gly8 and Arg11. 2 residues coordinate Mg(2+): Glu21 and Asp23. 3 residues coordinate ATP: Arg91, Arg137, and Arg140. CTP contacts are provided by Arg91, Arg137, and Arg140. The HD domain occupies 228-329 (TGIHSLMALR…VKLLEQVDAF (102 aa)).

The protein belongs to the tRNA nucleotidyltransferase/poly(A) polymerase family. Bacterial CCA-adding enzyme type 1 subfamily. In terms of assembly, monomer. Can also form homodimers and oligomers. It depends on Mg(2+) as a cofactor. Requires Ni(2+) as cofactor.

It carries out the reaction a tRNA precursor + 2 CTP + ATP = a tRNA with a 3' CCA end + 3 diphosphate. The enzyme catalyses a tRNA with a 3' CCA end + 2 CTP + ATP = a tRNA with a 3' CCACCA end + 3 diphosphate. In terms of biological role, catalyzes the addition and repair of the essential 3'-terminal CCA sequence in tRNAs without using a nucleic acid template. Adds these three nucleotides in the order of C, C, and A to the tRNA nucleotide-73, using CTP and ATP as substrates and producing inorganic pyrophosphate. tRNA 3'-terminal CCA addition is required both for tRNA processing and repair. Also involved in tRNA surveillance by mediating tandem CCA addition to generate a CCACCA at the 3' terminus of unstable tRNAs. While stable tRNAs receive only 3'-terminal CCA, unstable tRNAs are marked with CCACCA and rapidly degraded. The chain is Multifunctional CCA protein from Legionella pneumophila (strain Paris).